The primary structure comprises 95 residues: Protein RALF-like 16 (95 aa).

An N-terminal signal peptide occupies residues 1–29 (MVAYEKSPIVFLFATMMLVMFLFCGSGEA). Disulfide bonds link C45–C53 and C65–C71.

It belongs to the plant rapid alkalinization factor (RALF) family.

It localises to the secreted. Functionally, cell signaling peptide that may regulate plant stress, growth, and development. Mediates a rapid alkalinization of extracellular space by mediating a transient increase in the cytoplasmic Ca(2+) concentration leading to a calcium-dependent signaling events through a cell surface receptor and a concomitant activation of some intracellular mitogen-activated protein kinases. The sequence is that of Protein RALF-like 16 (RALFL16) from Arabidopsis thaliana (Mouse-ear cress).